A 427-amino-acid polypeptide reads, in one-letter code: Enolase (427 aa).

Gln163 lines the (2R)-2-phosphoglycerate pocket. Residue Glu205 is the Proton donor of the active site. Residues Asp242, Glu285, and Asp312 each contribute to the Mg(2+) site. (2R)-2-phosphoglycerate is bound by residues Lys337, Arg366, Ser367, and Lys388. Residue Lys337 is the Proton acceptor of the active site.

This sequence belongs to the enolase family. Mg(2+) is required as a cofactor.

Its subcellular location is the cytoplasm. It localises to the secreted. It is found in the cell surface. The enzyme catalyses (2R)-2-phosphoglycerate = phosphoenolpyruvate + H2O. The protein operates within carbohydrate degradation; glycolysis; pyruvate from D-glyceraldehyde 3-phosphate: step 4/5. Catalyzes the reversible conversion of 2-phosphoglycerate (2-PG) into phosphoenolpyruvate (PEP). It is essential for the degradation of carbohydrates via glycolysis. This is Enolase from Janthinobacterium sp. (strain Marseille) (Minibacterium massiliensis).